Consider the following 468-residue polypeptide: Protein ABHD15 (468 aa).

The first 23 residues, 1–23 (MPPWGAALALILAVLALLGLLGP), serve as a signal peptide directing secretion. Residues 33-61 (VGERTLPGAQDRDDGEEADGGGPADQFSD) form a disordered region. Catalysis depends on charge relay system residues Asp360 and His391. Position 434 is a phosphoserine (Ser434).

This sequence belongs to the AB hydrolase superfamily. AB hydrolase 4 family. In terms of assembly, interacts with PDE3B; this interaction regulates PDE3B's stability and expression and, thereby, impacts the antilipolytic action of insulin.

It is found in the secreted. In terms of biological role, may regulate adipocyte lipolysis and liver lipid accumulation. This Homo sapiens (Human) protein is Protein ABHD15.